A 417-amino-acid chain; its full sequence is Phosphoglycerate kinase 1 (417 aa).

An N-acetylserine modification is found at S2. Phosphoserine occurs at positions 2 and 4. K6 carries the N6-succinyllysine modification. The residue at position 11 (K11) is an N6-acetyllysine. The (2R)-3-phosphoglycerate site is built by V23, D24, F25, N26, Q38, R39, S62, H63, G65, and R66. The segment at 38–43 (QRIKAA) is mitochondrial targeting region exposed following cis-trans isomerization by PIN1 and recognized by the TOM complex for mitochondrial translocation of the protein. K75 carries the N6-acetyllysine modification. Y76 carries the post-translational modification Phosphotyrosine. An N6-acetyllysine mark is found at K86 and K91. K97 bears the N6-(2-hydroxyisobutyryl)lysine; alternate mark. At K97 the chain carries N6-acetyllysine; alternate. Residues L122 and R123 each coordinate (2R)-3-phosphoglycerate. K131 bears the N6-acetyllysine; alternate mark. The residue at position 131 (K131) is an N6-malonyllysine; alternate. The residue at position 146 (K146) is an N6-acetyllysine. The (2R)-3-phosphoglycerate site is built by H170 and R171. N6-succinyllysine is present on K191. A Phosphotyrosine modification is found at Y196. K199 carries the N6-acetyllysine modification. S203 bears the Phosphoserine mark. G214 is a binding site for ADP. CDP is bound at residue G214. Residues A215 and K216 each contribute to the AMP site. ATP is bound at residue A215. A215 is a binding site for Mg(2+). At K216 the chain carries N6-(2-hydroxyisobutyryl)lysine. Mg(2+) is bound by residues A218 and D219. D219 serves as a coordination point for CDP. K220 serves as a coordination point for AMP. Residue K220 coordinates ATP. K220 is modified (N6-(2-hydroxyisobutyryl)lysine). Residue G238 coordinates ADP. G238 lines the CDP pocket. G239 contacts AMP. G239 lines the ATP pocket. N6-acetyllysine is present on residues K267 and K291. AMP is bound at residue G313. G313 serves as a coordination point for ATP. K323 carries the post-translational modification N6-(2-hydroxyisobutyryl)lysine. The CDP site is built by G338, V340, and F343. ADP is bound at residue F343. E344 contacts AMP. ATP-binding residues include E344, D375, and T376. Mg(2+) is bound at residue D375.

This sequence belongs to the phosphoglycerate kinase family. As to quaternary structure, monomer. Interacts with kinase MAPK1/ERK2; the interaction is direct, occurs under hypoxic conditions, and promotes its interaction with PIN1. Interacts with peptidyl-prolyl cis-trans isomerase PIN1; the interaction is direct, occurs under hypoxic conditions, and targets the protein to the mitochondrion by promoting interactions with the TOM complex. Interacts with mitochondrial circRNA mcPGK1 (via its 2nd stem-loop); the interaction is direct and targets the protein to the mitochondrion by promoting interactions with the TOM complex. Interacts with pyruvate dehydrogenase kinase PDK1; the interaction is direct, occurs under hypoxic conditions and leads to PDK1-mediated inhibition of pyruvate dehydrogenase complex activity. Mg(2+) serves as cofactor. In terms of processing, phosphorylated at Ser-203 by MAPK1/ERK2 under hypoxic conditions, which promotes its mitochondrial targeting.

It localises to the cytoplasm. The protein resides in the cytosol. Its subcellular location is the mitochondrion matrix. It catalyses the reaction (2R)-3-phosphoglycerate + ATP = (2R)-3-phospho-glyceroyl phosphate + ADP. The enzyme catalyses L-seryl-[protein] + ATP = O-phospho-L-seryl-[protein] + ADP + H(+). Its pathway is carbohydrate degradation; glycolysis; pyruvate from D-glyceraldehyde 3-phosphate: step 2/5. Functionally, catalyzes one of the two ATP producing reactions in the glycolytic pathway via the reversible conversion of 1,3-diphosphoglycerate to 3-phosphoglycerate. Both L- and D- forms of purine and pyrimidine nucleotides can be used as substrates, but the activity is much lower on pyrimidines. In addition to its role as a glycolytic enzyme, it seems that PGK-1 acts as a polymerase alpha cofactor protein (primer recognition protein). Acts as a protein kinase when localized to the mitochondrion where it phosphorylates pyruvate dehydrogenase kinase PDK1 to inhibit pyruvate dehydrogenase complex activity and suppress the formation of acetyl-coenzyme A from pyruvate, and consequently inhibit oxidative phosphorylation and promote glycolysis. May play a role in sperm motility. This is Phosphoglycerate kinase 1 (PGK1) from Notamacropus eugenii (Tammar wallaby).